A 213-amino-acid polypeptide reads, in one-letter code: Ribonuclease HII (213 aa).

In terms of domain architecture, RNase H type-2 spans Lys-25 to His-213. Residues Asp-31, Glu-32, and Asp-124 each coordinate a divalent metal cation.

The protein belongs to the RNase HII family. Requires Mn(2+) as cofactor. The cofactor is Mg(2+).

The protein localises to the cytoplasm. The enzyme catalyses Endonucleolytic cleavage to 5'-phosphomonoester.. Its function is as follows. Endonuclease that specifically degrades the RNA of RNA-DNA hybrids. In Magnetococcus marinus (strain ATCC BAA-1437 / JCM 17883 / MC-1), this protein is Ribonuclease HII.